A 167-amino-acid chain; its full sequence is SsrA-binding protein (167 aa).

The disordered stretch occupies residues Q139–A167. Positions R144 to R158 are enriched in basic and acidic residues.

The protein belongs to the SmpB family.

Its subcellular location is the cytoplasm. Required for rescue of stalled ribosomes mediated by trans-translation. Binds to transfer-messenger RNA (tmRNA), required for stable association of tmRNA with ribosomes. tmRNA and SmpB together mimic tRNA shape, replacing the anticodon stem-loop with SmpB. tmRNA is encoded by the ssrA gene; the 2 termini fold to resemble tRNA(Ala) and it encodes a 'tag peptide', a short internal open reading frame. During trans-translation Ala-aminoacylated tmRNA acts like a tRNA, entering the A-site of stalled ribosomes, displacing the stalled mRNA. The ribosome then switches to translate the ORF on the tmRNA; the nascent peptide is terminated with the 'tag peptide' encoded by the tmRNA and targeted for degradation. The ribosome is freed to recommence translation, which seems to be the essential function of trans-translation. This is SsrA-binding protein from Xylella fastidiosa (strain M12).